We begin with the raw amino-acid sequence, 276 residues long: 4-diphosphocytidyl-2-C-methyl-D-erythritol kinase (276 aa).

The active site involves K13. 94–104 (PHAGGIGGGSA) contributes to the ATP binding site. The active site involves D131.

It belongs to the GHMP kinase family. IspE subfamily.

The enzyme catalyses 4-CDP-2-C-methyl-D-erythritol + ATP = 4-CDP-2-C-methyl-D-erythritol 2-phosphate + ADP + H(+). Its pathway is isoprenoid biosynthesis; isopentenyl diphosphate biosynthesis via DXP pathway; isopentenyl diphosphate from 1-deoxy-D-xylulose 5-phosphate: step 3/6. Its function is as follows. Catalyzes the phosphorylation of the position 2 hydroxy group of 4-diphosphocytidyl-2C-methyl-D-erythritol. This Jannaschia sp. (strain CCS1) protein is 4-diphosphocytidyl-2-C-methyl-D-erythritol kinase.